A 310-amino-acid chain; its full sequence is MEAQNHTTVKEFILLGLTENSTLRVILFMIFLGIYTVTLVGNFSIISLIRSCPQLHTPMYLFLSHLALVDIGFSTSITPIMLTGFLGHTVTLSVAACVAQFCIAVTFGTVECFLLAVMAYDRYVAICSPLLYSTHMSPRICFLLVGASYVGGCVNSGTFTSCLLILSFCGPNQIDHFFCDFPAVLKLSCSDVSIIGIIPSISAGSIIVITVFVIAVSYTYILITILNMRSTEGRHKAFSTCTSHLTAVTLYYGTITFIYVMPKSNYSTAQNKILSVFYTVVIPMLNPLIYSLRNRDVKEALRKAIIRIFP.

Residues 1-25 (MEAQNHTTVKEFILLGLTENSTLRV) lie on the Extracellular side of the membrane. Residues Asn-5 and Asn-20 are each glycosylated (N-linked (GlcNAc...) asparagine). A helical membrane pass occupies residues 26-46 (ILFMIFLGIYTVTLVGNFSII). Residues 47–54 (SLIRSCPQ) lie on the Cytoplasmic side of the membrane. A helical transmembrane segment spans residues 55–75 (LHTPMYLFLSHLALVDIGFST). Topologically, residues 76-99 (SITPIMLTGFLGHTVTLSVAACVA) are extracellular. Residues Cys-97 and Cys-189 are joined by a disulfide bond. The helical transmembrane segment at 100-120 (QFCIAVTFGTVECFLLAVMAY) threads the bilayer. Residues 121–133 (DRYVAICSPLLYS) are Cytoplasmic-facing. A helical transmembrane segment spans residues 134–154 (THMSPRICFLLVGASYVGGCV). Over 155–196 (NSGTFTSCLLILSFCGPNQIDHFFCDFPAVLKLSCSDVSIIG) the chain is Extracellular. The helical transmembrane segment at 197 to 217 (IIPSISAGSIIVITVFVIAVS) threads the bilayer. Topologically, residues 218 to 237 (YTYILITILNMRSTEGRHKA) are cytoplasmic. The helical transmembrane segment at 238 to 258 (FSTCTSHLTAVTLYYGTITFI) threads the bilayer. At 259–271 (YVMPKSNYSTAQN) the chain is on the extracellular side. Residue Asn-265 is glycosylated (N-linked (GlcNAc...) asparagine). The helical transmembrane segment at 272-292 (KILSVFYTVVIPMLNPLIYSL) threads the bilayer. Residues 293-310 (RNRDVKEALRKAIIRIFP) are Cytoplasmic-facing.

The protein belongs to the G-protein coupled receptor 1 family.

It is found in the cell membrane. In terms of biological role, potential odorant receptor. The polypeptide is Olfactory receptor 5P56 (Mus musculus (Mouse)).